The primary structure comprises 177 residues: ATP synthase subunit delta (177 aa).

It belongs to the ATPase delta chain family. In terms of assembly, F-type ATPases have 2 components, F(1) - the catalytic core - and F(0) - the membrane proton channel. F(1) has five subunits: alpha(3), beta(3), gamma(1), delta(1), epsilon(1). F(0) has three main subunits: a(1), b(2) and c(10-14). The alpha and beta chains form an alternating ring which encloses part of the gamma chain. F(1) is attached to F(0) by a central stalk formed by the gamma and epsilon chains, while a peripheral stalk is formed by the delta and b chains.

The protein localises to the cell inner membrane. F(1)F(0) ATP synthase produces ATP from ADP in the presence of a proton or sodium gradient. F-type ATPases consist of two structural domains, F(1) containing the extramembraneous catalytic core and F(0) containing the membrane proton channel, linked together by a central stalk and a peripheral stalk. During catalysis, ATP synthesis in the catalytic domain of F(1) is coupled via a rotary mechanism of the central stalk subunits to proton translocation. Functionally, this protein is part of the stalk that links CF(0) to CF(1). It either transmits conformational changes from CF(0) to CF(1) or is implicated in proton conduction. The chain is ATP synthase subunit delta from Actinobacillus pleuropneumoniae serotype 7 (strain AP76).